The following is a 479-amino-acid chain: Variant surface glycoprotein ILTAT 1.22 (479 aa).

The N-terminal stretch at 1–12 (MDTAQVFALFYM) is a signal peptide. Asparagine 120 and asparagine 458 each carry an N-linked (GlcNAc...) asparagine glycan. A lipid anchor (GPI-anchor amidated asparagine) is attached at asparagine 462. The propeptide at 463–479 (NSFAIKTSTLLLAVLLF) is removed in mature form.

It is found in the cell membrane. In terms of biological role, VSG forms a coat on the surface of the parasite. The trypanosome evades the immune response of the host by expressing a series of antigenically distinct VSGs from an estimated 1000 VSG genes. This is Variant surface glycoprotein ILTAT 1.22 from Trypanosoma brucei brucei.